The sequence spans 135 residues: Inner membrane protein YgfX (135 aa).

Residues 1 to 11 (MVLWQSDLRVS) are Cytoplasmic-facing. A not required to inhibit FtsZ or MreB polymerization region spans residues 1–96 (MVLWQSDLRV…APWMIKSGMM (96 aa)). Residues 12 to 32 (WRAQWLSLLIHGLVAAVILLM) traverse the membrane as a helical segment. Residues 33–37 (PWPLS) lie on the Periplasmic side of the membrane. A helical transmembrane segment spans residues 38 to 54 (YTPLWMVLLSLVVFDCV). Over 55–135 (RSQRRINARQ…RILLQQETQR (81 aa)) the chain is Cytoplasmic.

As to quaternary structure, interacts with MreB and FtsZ; interaction with the latter requires FtsZ residues 33-49.

Its subcellular location is the cell inner membrane. Its function is as follows. A probable inner membrane protein. Has been shown not to be a toxin, no effects on growth are seen in LB or minimal medium up to 6 or 21 hours (respectively) after induction of expression. Interacts with cytoskeletal proteins FtsZ and MreB; inhibits FtsZ GTP-dependent polymerization as well as MreB ATP-dependent polymerization. Restores production of prodigiosin antibiotic (Pig) in Serratia strains with deletions of sdhE-ygfX; overexpression of this protein and CptB also restores Pig production to a slightly lesser extent in Serratia. The polypeptide is Inner membrane protein YgfX (Escherichia coli (strain K12)).